The sequence spans 96 residues: Large ribosomal subunit protein eL14 (96 aa).

Belongs to the eukaryotic ribosomal protein eL14 family.

This Staphylothermus marinus (strain ATCC 43588 / DSM 3639 / JCM 9404 / F1) protein is Large ribosomal subunit protein eL14.